The chain runs to 517 residues: Ribonuclease Y (517 aa).

The chain crosses the membrane as a helical span at residues 1–21 (MIEVLIGLGAGVVGVGAGYLY). The region spanning 207 to 273 (LINVVNIKND…TRVIELLVED (67 aa)) is the KH domain. Positions 333–426 (ALAHSLEVAH…VCAADALSAA (94 aa)) constitute an HD domain.

The protein belongs to the RNase Y family.

The protein resides in the cell membrane. In terms of biological role, endoribonuclease that initiates mRNA decay. This Campylobacter concisus (strain 13826) protein is Ribonuclease Y.